We begin with the raw amino-acid sequence, 306 residues long: Glutaminase (306 aa).

Substrate contacts are provided by Ser-64, Asn-115, Glu-159, Asn-166, Tyr-190, Tyr-242, and Val-260.

It belongs to the glutaminase family. Homotetramer.

It carries out the reaction L-glutamine + H2O = L-glutamate + NH4(+). The polypeptide is Glutaminase (Photobacterium profundum (strain SS9)).